The primary structure comprises 289 residues: MLLKLGIPKGSLENATIDLFRRAGFQITTSSRSYFPGIDDPEIECMLIRAQEMARYVEDGILDSGLTGRDWIEENEAAIVPVADLIYAKQSFGKVRWVLAVPEASSFRTVHDLEGKIIATELVATTKRYMAKHGVKAKVEFSWGATEVKPPVLADAIVEVTETGSSLRANKLKIIDTVLESNTQLIANKASWEDPEKRRKLEDIRMLLQGAINALGKVGLMLNVHKDNLKAVLGVLPALKRPTISHLSDDEWLAVNTILDESTVRDIIPRLKQAGGEGIVEYPLNKIVL.

The protein belongs to the ATP phosphoribosyltransferase family. Long subfamily. It depends on Mg(2+) as a cofactor.

The protein localises to the cytoplasm. The catalysed reaction is 1-(5-phospho-beta-D-ribosyl)-ATP + diphosphate = 5-phospho-alpha-D-ribose 1-diphosphate + ATP. Its pathway is amino-acid biosynthesis; L-histidine biosynthesis; L-histidine from 5-phospho-alpha-D-ribose 1-diphosphate: step 1/9. Feedback inhibited by histidine. Functionally, catalyzes the condensation of ATP and 5-phosphoribose 1-diphosphate to form N'-(5'-phosphoribosyl)-ATP (PR-ATP). Has a crucial role in the pathway because the rate of histidine biosynthesis seems to be controlled primarily by regulation of HisG enzymatic activity. The chain is ATP phosphoribosyltransferase from Solibacter usitatus (strain Ellin6076).